A 336-amino-acid chain; its full sequence is Glyceraldehyde-3-phosphate dehydrogenase (336 aa).

NAD(+) contacts are provided by residues 12–13 (RI), D35, R79, and S121. D-glyceraldehyde 3-phosphate contacts are provided by residues 152–154 (SCT) and T183. C153 functions as the Nucleophile in the catalytic mechanism. N184 serves as a coordination point for NAD(+). D-glyceraldehyde 3-phosphate is bound by residues R198, 211 to 212 (TG), and R234. Residue N317 participates in NAD(+) binding.

The protein belongs to the glyceraldehyde-3-phosphate dehydrogenase family. As to quaternary structure, homotetramer.

It localises to the cytoplasm. The catalysed reaction is D-glyceraldehyde 3-phosphate + phosphate + NAD(+) = (2R)-3-phospho-glyceroyl phosphate + NADH + H(+). It functions in the pathway carbohydrate degradation; glycolysis; pyruvate from D-glyceraldehyde 3-phosphate: step 1/5. Resistant to pentalenolactone. Its function is as follows. Catalyzes the oxidative phosphorylation of glyceraldehyde 3-phosphate (G3P) to 1,3-bisphosphoglycerate (BPG) using the cofactor NAD. The first reaction step involves the formation of a hemiacetal intermediate between G3P and a cysteine residue, and this hemiacetal intermediate is then oxidized to a thioester, with concomitant reduction of NAD to NADH. The reduced NADH is then exchanged with the second NAD, and the thioester is attacked by a nucleophilic inorganic phosphate to produce BPG. The polypeptide is Glyceraldehyde-3-phosphate dehydrogenase (gap) (Streptomyces coelicolor (strain ATCC BAA-471 / A3(2) / M145)).